Here is a 360-residue protein sequence, read N- to C-terminus: Peptide chain release factor 1 (360 aa).

Q236 is subject to N5-methylglutamine. Residues 288-308 (QDEQDAERKSTIGTGDRSERI) form a disordered region. The segment covering 293-308 (AERKSTIGTGDRSERI) has biased composition (basic and acidic residues).

This sequence belongs to the prokaryotic/mitochondrial release factor family. Post-translationally, methylated by PrmC. Methylation increases the termination efficiency of RF1.

It localises to the cytoplasm. Functionally, peptide chain release factor 1 directs the termination of translation in response to the peptide chain termination codons UAG and UAA. This chain is Peptide chain release factor 1, found in Streptococcus equi subsp. zooepidemicus (strain H70).